The primary structure comprises 248 residues: Coenzyme F420:L-glutamate ligase (248 aa).

GTP-binding positions include 15-18 (IPLI), 45-46 (ET), and K50. D115 is an a divalent metal cation binding site. Residue N118 participates in GTP binding. Residues D155, S156, and Q213 each coordinate a divalent metal cation. 211–218 (MGQSDEGI) lines the GTP pocket.

This sequence belongs to the CofE family. As to quaternary structure, homodimer. Mg(2+) is required as a cofactor. Mn(2+) serves as cofactor. Requires K(+) as cofactor.

It carries out the reaction oxidized coenzyme F420-0 + GTP + L-glutamate = oxidized coenzyme F420-1 + GDP + phosphate + H(+). The catalysed reaction is oxidized coenzyme F420-1 + GTP + L-glutamate = oxidized coenzyme F420-2 + GDP + phosphate + H(+). The protein operates within cofactor biosynthesis; coenzyme F420 biosynthesis. Its function is as follows. Catalyzes the GTP-dependent successive addition of two or more gamma-linked L-glutamates to the L-lactyl phosphodiester of 7,8-didemethyl-8-hydroxy-5-deazariboflavin (F420-0) to form coenzyme F420-0-glutamyl-glutamate (F420-2) or polyglutamated F420 derivatives. The chain is Coenzyme F420:L-glutamate ligase from Methanococcus maripaludis (strain C6 / ATCC BAA-1332).